A 434-amino-acid polypeptide reads, in one-letter code: tRNA dimethylallyltransferase (434 aa).

10 to 17 (GTTGAGKS) is an ATP binding site. 12–17 (TGAGKS) contributes to the substrate binding site. Interaction with substrate tRNA stretches follow at residues 35–38 (DSMQ) and 166–170 (RKIRR). Residues 211–233 (SLVLMPRLDKRVDKMLSHGLVDE) form an interaction with isopentenylpyrophosphate transferase region. Interaction with substrate tRNA stretches follow at residues 256–258 (QCI), 281–299 (RMKV…WIQS), and 291–298 (KSQKKWIQ). The Matrin-type zinc-finger motif lies at 380–416 (FVCEECLDKRGDPFTVIGEDAFNVHIKSRKHKTTVRR).

This sequence belongs to the IPP transferase family.

The protein resides in the mitochondrion. Its subcellular location is the cytoplasm. It localises to the nucleus. It catalyses the reaction adenosine(37) in tRNA + dimethylallyl diphosphate = N(6)-dimethylallyladenosine(37) in tRNA + diphosphate. Functionally, catalyzes the transfer of a dimethylallyl group onto the adenine at position 37 of both cytosolic and mitochondrial tRNAs, leading to the formation of N6-(dimethylallyl)adenosine (i(6)A). The sequence is that of tRNA dimethylallyltransferase (tit1) from Schizosaccharomyces pombe (strain 972 / ATCC 24843) (Fission yeast).